The chain runs to 147 residues: Cyanate hydratase (147 aa).

Residues R88, E91, and S114 contribute to the active site.

The protein belongs to the cyanase family.

It catalyses the reaction cyanate + hydrogencarbonate + 3 H(+) = NH4(+) + 2 CO2. In terms of biological role, catalyzes the reaction of cyanate with bicarbonate to produce ammonia and carbon dioxide. This is Cyanate hydratase from Acaryochloris marina (strain MBIC 11017).